Here is a 546-residue protein sequence, read N- to C-terminus: Chaperonin GroEL (546 aa).

Residues 30 to 33, Lys51, 87 to 91, Gly415, 479 to 481, and Asp495 each bind ATP; these read TLGP, DGTTT, and NAA.

This sequence belongs to the chaperonin (HSP60) family. Forms a cylinder of 14 subunits composed of two heptameric rings stacked back-to-back. Interacts with the co-chaperonin GroES.

The protein resides in the cytoplasm. It carries out the reaction ATP + H2O + a folded polypeptide = ADP + phosphate + an unfolded polypeptide.. Together with its co-chaperonin GroES, plays an essential role in assisting protein folding. The GroEL-GroES system forms a nano-cage that allows encapsulation of the non-native substrate proteins and provides a physical environment optimized to promote and accelerate protein folding. This is Chaperonin GroEL from Pseudomonas putida (strain ATCC 47054 / DSM 6125 / CFBP 8728 / NCIMB 11950 / KT2440).